The sequence spans 492 residues: 5-taurinomethyluridine-[tRNA] synthase subunit GTPB3, mitochondrial (492 aa).

A mitochondrion-targeting transit peptide spans Met-1–Cys-20. 3 residues coordinate 5,10-methylenetetrahydrofolate: Arg-52, Glu-112, and Lys-152. The TrmE-type G domain maps to Gly-249–Ala-416. GTP is bound by residues Gly-256 to Ser-263, Gly-282 to Asp-286, Asp-303 to Gly-306, and Asn-374 to Asp-377. Residue Asn-259 participates in K(+) binding. Residues Ser-263 and Thr-284 each coordinate Mg(2+). Lys-492 contacts 5,10-methylenetetrahydrofolate.

The protein belongs to the TRAFAC class TrmE-Era-EngA-EngB-Septin-like GTPase superfamily. TrmE GTPase family. Homodimer; forms a dimer in the presence of potassium. Interacts with MTO1; forms the GTPBP3-MTO1 complex composed of homodimers of GTPBP3 and MTO1. K(+) is required as a cofactor. In terms of tissue distribution, ubiquitously expressed. Highly expressed in tissues with high metabolic rates including heart, liver and brain. Weakly expressed in skeletal muscle.

Its subcellular location is the mitochondrion. It catalyses the reaction GTP + H2O = GDP + phosphate + H(+). Functionally, GTPase component of the GTPBP3-MTO1 complex that catalyzes the 5-taurinomethyluridine (taum(5)U) modification at the 34th wobble position (U34) of mitochondrial tRNAs (mt-tRNAs), which plays a role in mt-tRNA decoding and mitochondrial translation. Taum(5)U formation on mammalian mt-tRNA requires the presence of both GTPBP3-mediated GTPase activity and MTO1 catalytic activity. The protein is 5-taurinomethyluridine-[tRNA] synthase subunit GTPB3, mitochondrial of Mus musculus (Mouse).